The following is a 152-amino-acid chain: Transcriptional regulator MraZ (152 aa).

2 SpoVT-AbrB domains span residues 5–52 and 81–124; these read ATLV…PLPE and ASEC…DETT.

This sequence belongs to the MraZ family. As to quaternary structure, forms oligomers.

It localises to the cytoplasm. Its subcellular location is the nucleoid. Negatively regulates its own expression and that of the subsequent genes in the proximal part of the division and cell wall (dcw) gene cluster. Acts by binding directly to DNA. May also regulate the expression of genes outside the dcw cluster. This is Transcriptional regulator MraZ from Klebsiella pneumoniae (strain 342).